Reading from the N-terminus, the 57-residue chain is Small polypeptide DEVIL 20 (57 aa).

N-linked (GlcNAc...) asparagine glycosylation is present at asparagine 5. A required for DVL/RTFL small polypeptide activity region spans residues threonine 16–glycine 47. A helical membrane pass occupies residues arginine 29–glycine 45.

This sequence belongs to the DVL/RTFL small polypeptides family.

It localises to the cell membrane. Functionally, small polypeptide acting as a regulatory molecule which coordinates cellular responses required for differentiation, growth and development, probably by restricting polar cell proliferation in lateral organs and coordinating socket cell recruitment and differentiation at trichome sites. The protein is Small polypeptide DEVIL 20 of Arabidopsis thaliana (Mouse-ear cress).